A 231-amino-acid polypeptide reads, in one-letter code: 5'-methylthioadenosine/S-adenosylhomocysteine nucleosidase (231 aa).

Glu12 serves as the catalytic Proton acceptor. Substrate is bound by residues Gly78, Met153, and Met174–Glu175. Asp198 functions as the Proton donor in the catalytic mechanism.

Belongs to the PNP/UDP phosphorylase family. MtnN subfamily.

It carries out the reaction S-adenosyl-L-homocysteine + H2O = S-(5-deoxy-D-ribos-5-yl)-L-homocysteine + adenine. The enzyme catalyses S-methyl-5'-thioadenosine + H2O = 5-(methylsulfanyl)-D-ribose + adenine. It catalyses the reaction 5'-deoxyadenosine + H2O = 5-deoxy-D-ribose + adenine. It participates in amino-acid biosynthesis; L-methionine biosynthesis via salvage pathway; S-methyl-5-thio-alpha-D-ribose 1-phosphate from S-methyl-5'-thioadenosine (hydrolase route): step 1/2. Functionally, catalyzes the irreversible cleavage of the glycosidic bond in both 5'-methylthioadenosine (MTA) and S-adenosylhomocysteine (SAH/AdoHcy) to adenine and the corresponding thioribose, 5'-methylthioribose and S-ribosylhomocysteine, respectively. Also cleaves 5'-deoxyadenosine, a toxic by-product of radical S-adenosylmethionine (SAM) enzymes, into 5-deoxyribose and adenine. This is 5'-methylthioadenosine/S-adenosylhomocysteine nucleosidase from Bacillus subtilis (strain 168).